We begin with the raw amino-acid sequence, 54 residues long: MPSRLRXTRKLRGHVSHGHGRIGKHRKHPGGRGNAGGMHHHRINFDKYHXGYFG.

Residues 1-30 (MPSRLRXTRKLRGHVSHGHGRIGKHRKHPG) show a composition bias toward basic residues. The segment at 1 to 42 (MPSRLRXTRKLRGHVSHGHGRIGKHRKHPGGRGNAGGMHHHR) is disordered. Position 39 is a (3S)-3-hydroxyhistidine (H39). K47 is modified (N6-acetyllysine).

This sequence belongs to the universal ribosomal protein uL15 family. In terms of assembly, component of the large ribosomal subunit. In terms of processing, hydroxylated on His-39 by MINA.

It localises to the cytoplasm. Functionally, component of the large ribosomal subunit. The ribosome is a large ribonucleoprotein complex responsible for the synthesis of proteins in the cell. This is Large ribosomal subunit protein uL15 (RPL27A) from Sus scrofa (Pig).